We begin with the raw amino-acid sequence, 89 residues long: cAMP-regulated phosphoprotein 21 (89 aa).

A disordered region spans residues 1-89; it reads MSEQGDLNQA…GGESLQDQTL (89 aa). S2 is subject to N-acetylserine. A compositionally biased stretch (low complexity) spans 9-25; it reads QAIAEEGGTEQETATPE. S33 carries the post-translational modification Phosphoserine. The segment covering 40–53 has biased composition (basic and acidic residues); sequence LELQRRLEAQNQER. Residue S56 is modified to Phosphoserine.

Interacts with CALM1. Phosphorylation at Ser-56 favors interaction with CALM1.

Its subcellular location is the cytoplasm. Functionally, may act as a competitive inhibitor of calmodulin-dependent enzymes such as calcineurin in neurons. This chain is cAMP-regulated phosphoprotein 21 (ARPP21), found in Pongo abelii (Sumatran orangutan).